The following is a 342-amino-acid chain: N-acetyl-gamma-glutamyl-phosphate reductase (342 aa).

The active site involves Cys149.

It belongs to the NAGSA dehydrogenase family. Type 1 subfamily.

The protein localises to the cytoplasm. It catalyses the reaction N-acetyl-L-glutamate 5-semialdehyde + phosphate + NADP(+) = N-acetyl-L-glutamyl 5-phosphate + NADPH + H(+). It functions in the pathway amino-acid biosynthesis; L-arginine biosynthesis; N(2)-acetyl-L-ornithine from L-glutamate: step 3/4. Its function is as follows. Catalyzes the NADPH-dependent reduction of N-acetyl-5-glutamyl phosphate to yield N-acetyl-L-glutamate 5-semialdehyde. The chain is N-acetyl-gamma-glutamyl-phosphate reductase from Thiobacillus denitrificans (strain ATCC 25259 / T1).